Reading from the N-terminus, the 232-residue chain is Peptidyl-prolyl cis-trans isomerase FKBP18, chloroplastic (232 aa).

In terms of domain architecture, PPIase FKBP-type spans 108–226 (GSTAQVHFDC…ELNIELLRVT (119 aa)).

This sequence belongs to the FKBP-type PPIase family.

It is found in the plastid. Its subcellular location is the chloroplast thylakoid lumen. The enzyme catalyses [protein]-peptidylproline (omega=180) = [protein]-peptidylproline (omega=0). PPIases accelerate the folding of proteins. It catalyzes the cis-trans isomerization of proline imidic peptide bonds in oligopeptides. This chain is Peptidyl-prolyl cis-trans isomerase FKBP18, chloroplastic (FKBP18), found in Arabidopsis thaliana (Mouse-ear cress).